The chain runs to 470 residues: Properdin (470 aa).

The signal sequence occupies residues 1-26; the sequence is MTAPVQVPQSLLLLLMLLLTLPATGS. 7 consecutive TSP type-1 domains span residues 27–75, 76–133, 135–190, 192–254, 256–312, 314–376, and 380–463; these read DPVL…QACR, SPRW…QCCP, MGGW…QVCP, HGAW…PPCP, AGGW…VPCP, DGEW…QNCI, and KGSW…PACK. 3 cysteine pairs are disulfide-bonded: cysteine 31-cysteine 55, cysteine 42-cysteine 71, and cysteine 56-cysteine 74. Tryptophan 82 and tryptophan 85 each carry a C-linked (Man) tryptophan glycan. Cystine bridges form between cysteine 88–cysteine 126, cysteine 92–cysteine 132, cysteine 103–cysteine 110, cysteine 131–cysteine 169, cysteine 147–cysteine 183, cysteine 151–cysteine 189, and cysteine 162–cysteine 173. Residues tryptophan 138, tryptophan 141, and tryptophan 144 are each glycosylated (C-linked (Man) tryptophan). Threonine 150 is a glycosylation site (O-linked (Fuc...) threonine). Residues tryptophan 195, tryptophan 198, and tryptophan 201 are each glycosylated (C-linked (Man) tryptophan). 3 disulfide bridges follow: cysteine 204–cysteine 247, cysteine 208–cysteine 253, and cysteine 223–cysteine 237. A glycan (O-linked (Fuc...) serine) is linked at serine 207. Residues tryptophan 259 and tryptophan 262 are each glycosylated (C-linked (Man) tryptophan). Intrachain disulfides connect cysteine 268–cysteine 305, cysteine 272–cysteine 311, and cysteine 283–cysteine 295. Threonine 271 is a glycosylation site (O-linked (Fuc...) threonine). C-linked (Man) tryptophan glycans are attached at residues tryptophan 320 and tryptophan 323. Cystine bridges form between cysteine 326–cysteine 369, cysteine 336–cysteine 375, and cysteine 349–cysteine 359. Residues 350–358 are interaction with Complement C3 beta chain; sequence KGRKFNGQR. 3 C-linked (Man) tryptophan glycosylation sites follow: tryptophan 383, tryptophan 386, and tryptophan 389. Cystine bridges form between cysteine 392/cysteine 456, cysteine 396/cysteine 462, and cysteine 408/cysteine 440. An N-linked (GlcNAc...) asparagine glycan is attached at asparagine 429.

As to quaternary structure, in plasma, properdin exists as dimers, trimers or tetramers in the relative proportions of 26:54:20. Interacts with the pro-C3-convertase enzyme complex (C3b-Bb) comprised of Complement C3 beta chain (C3b) and the Complement factor B Bb fragment (Bb), where it binds (via its TSP type-1 5 domain) with C3b and Bb. This interaction stabilizes the complex and allows it to become the active C3-convertase enzyme complex (C3b-Bb-FP). Interacts with C3b. Interacts with CFB.

Its subcellular location is the secreted. Functionally, a positive regulator of the alternate pathway of complement. It binds to and stabilizes the C3- and C5-convertase enzyme complexes. Inhibits CFI-CFH mediated degradation of Inhibits CFI-CFH mediated degradation of Complement C3 beta chain (C3b). The sequence is that of Properdin (CFP) from Cavia porcellus (Guinea pig).